Here is a 484-residue protein sequence, read N- to C-terminus: Probable peptide/nitrate transporter At3g43790 (484 aa).

The next 12 membrane-spanning stretches (helical) occupy residues 39-59, 76-96, 107-127, 129-149, 168-188, 210-230, 278-298, 318-338, 355-375, 381-401, 416-436, and 460-480; these read FIWL…PYIY, FYAG…SIFW, PIIL…GLST, FWLA…LGVI, VVST…GYLA, FLPS…CWWL, MAII…NEIF, VGEV…LVYP, VLLI…GVTL, CASI…FIML, ISMT…GVLF, and VFLV…IPYI.

This sequence belongs to the major facilitator superfamily.

The protein localises to the membrane. The chain is Probable peptide/nitrate transporter At3g43790 (ZIFL2) from Arabidopsis thaliana (Mouse-ear cress).